A 95-amino-acid chain; its full sequence is Small ribosomal subunit protein bS20 (95 aa).

Disordered regions lie at residues 1-26 (MALRHKSAQKRHRQSLKRRLINRSRK) and 76-95 (KSRLAKALNKAKAAQAAQPA). Residues 80-95 (AKALNKAKAAQAAQPA) show a composition bias toward low complexity.

This sequence belongs to the bacterial ribosomal protein bS20 family.

Binds directly to 16S ribosomal RNA. The sequence is that of Small ribosomal subunit protein bS20 from Deinococcus geothermalis (strain DSM 11300 / CIP 105573 / AG-3a).